The following is a 258-amino-acid chain: Regulatory protein RecX (258 aa).

The protein belongs to the RecX family.

The protein resides in the cytoplasm. Its function is as follows. Modulates RecA activity. The sequence is that of Regulatory protein RecX from Streptococcus agalactiae serotype Ia (strain ATCC 27591 / A909 / CDC SS700).